The sequence spans 204 residues: High frequency lysogenization protein HflD homolog (204 aa).

The protein belongs to the HflD family.

The protein resides in the cytoplasm. Its subcellular location is the cell inner membrane. This Xanthomonas axonopodis pv. citri (strain 306) protein is High frequency lysogenization protein HflD homolog.